We begin with the raw amino-acid sequence, 326 residues long: ELAV-like protein 1 (326 aa).

The residue at position 2 (Ser2) is an N-acetylserine. Residue Ser2 is modified to Phosphoserine. An RRM 1 domain is found at 20–98 (TNLIVNYLPQ…KTIKVSYARP (79 aa)). Phosphoserine is present on residues Ser100 and Ser158. Positions 106–186 (ANLYISGLPR…EPITVKFAAN (81 aa)) constitute an RRM 2 domain. A Glycyl lysine isopeptide (Lys-Gly) (interchain with G-Cter in SUMO2) cross-link involves residue Lys191. Residues Ser197 and Ser202 each carry the phosphoserine modification. Position 206 is an omega-N-methylarginine (Arg206). The residue at position 217 (Arg217) is an Asymmetric dimethylarginine; by CARM1; alternate. Arg217 is modified (omega-N-methylarginine; alternate). A phosphoserine mark is found at Ser221 and Ser318. The RRM 3 domain occupies 244-322 (WCIFIYNLGQ…KILQVSFKTN (79 aa)).

Belongs to the RRM elav family. As to quaternary structure, monomer and homodimer (in vitro). Interacts with ANP32A. Interacts with ZNF385A; the interaction is indirect and mRNA-dependent and may regulate p53/TP53 expression. Identified in a mRNP complex, at least composed of DHX9, DDX3X, ELAVL1, HNRNPU, IGF2BP1, ILF3, PABPC1, PCBP2, PTBP2, STAU1, STAU2, SYNCRIP and YBX1. Interacts with AGO1 and AGO2. Interacts with IGF2BP1; the interaction is enhanced by SEPIN14P20 peptide RBPR. Interacts with IGF2BP2 and IGF2BP3. Interacts with HNRNPL. Interacts with DHX36; this interaction occurs in a RNA-dependent manner. Interacts with ILF3; this interaction occurs in a RNA-dependent manner. Interacts with PLEKHN1. Interacts with SHFL; the interaction increases in presence of RNA. Interacts with YBX1; interaction recruits ELAVL1 on C5-methylcytosine (m5C)-containing mRNAs, thereby promoting mRNA stability. Interacts with FXR1. Phosphorylated by MAPKAPK2. Phosphorylated by PRKCD. Post-translationally, methylated at Arg-217 by CARM1 in macrophages in response to LPS challenge. Ubiquitous. Detected in brain, liver, thymus and muscle.

The protein resides in the cytoplasm. It is found in the nucleus. Its subcellular location is the stress granule. It localises to the P-body. Functionally, RNA-binding protein that binds to the 3'-UTR region of mRNAs and increases their stability. Involved in embryonic stem cell (ESC) differentiation: preferentially binds mRNAs that are not methylated by N6-methyladenosine (m6A), stabilizing them, promoting ESC differentiation. Has also been shown to be capable of binding to m6A-containing mRNAs and contributes to MYC stability by binding to m6A-containing MYC mRNAs. Binds to poly-U elements and AU-rich elements (AREs) in the 3'-UTR of target mRNAs. Binds avidly to the AU-rich element in FOS and IL3/interleukin-3 mRNAs. In the case of the FOS AU-rich element, binds to a core element of 27 nucleotides that contain AUUUA, AUUUUA, and AUUUUUA motifs. Binds preferentially to the 5'-UUUU[AG]UUU-3' motif in vitro. With ZNF385A, binds the 3'-UTR of p53/TP53 mRNA to control their nuclear export induced by CDKN2A. Hence, may regulate p53/TP53 expression and mediate in part the CDKN2A anti-proliferative activity. May also bind with ZNF385A the CCNB1 mRNA. Increases the stability of the leptin mRNA harboring an AU-rich element (ARE) in its 3' UTR. In Homo sapiens (Human), this protein is ELAV-like protein 1 (ELAVL1).